A 237-amino-acid chain; its full sequence is Lysophospholipase-like protein 1 (237 aa).

Ala2 carries the N-acetylalanine modification. Catalysis depends on charge relay system residues Ser124, Asp179, and His211.

It belongs to the AB hydrolase superfamily. AB hydrolase 2 family.

The protein localises to the cytoplasm. The protein resides in the cytosol. It carries out the reaction S-hexadecanoyl-L-cysteinyl-[protein] + H2O = L-cysteinyl-[protein] + hexadecanoate + H(+). Functionally, palmitoyl thioesterase that catalyzes depalmitoylation of CGAS and KCNMA1. Acts as a regulator of innate immunity by mediating depalmitoylation of CGAS, thereby preventing CGAS homodimerization and cyclic GMP-AMP synthase activity. Does not exhibit phospholipase nor triacylglycerol lipase activity, able to hydrolyze only short chain substrates due to its shallow active site. The protein is Lysophospholipase-like protein 1 of Pongo abelii (Sumatran orangutan).